Reading from the N-terminus, the 222-residue chain is MNYLIHQLLNAEEINLIKKELDKCSQQDWEDGKKTAGSHASMVKNNLQLNRNTEVSKKNAQLVTKKILSSQLIKSFSLPKKIHGIMFTKSSKNMHYGRHIDNPYMSSGRSDLSFTISLTNKDFYDGGELIIETMNTEEKFKLNPGEIILYPSSYLHAVNEVNNGERLVCVGWIESYVKSTEKREYLFDLDAGARSLLSKHGRSDELDLIFKSYSNLLRDIGE.

In terms of domain architecture, Fe2OG dioxygenase spans 81–175 (KIHGIMFTKS…RLVCVGWIES (95 aa)). Fe cation-binding residues include H99, D101, and H156. 2-oxoglutarate is bound at residue R166.

Requires Fe(2+) as cofactor. L-ascorbate serves as cofactor.

The chain is PKHD-type hydroxylase P9301_13621 from Prochlorococcus marinus (strain MIT 9301).